The chain runs to 64 residues: U-poneritoxin(01)-Om1a (64 aa).

The signal sequence occupies residues 1–27; sequence MKPSGLTFAFLVVFMMAIMYNSVQVTA. A propeptide spanning residues 28–45 is cleaved from the precursor; the sequence is DADADAEAEALANALAEA. Met62 bears the Methionine amide mark.

Truncated sequences of this peptide have also been found in the venom. It is possible they have been cleaved in the venom. Expressed by the venom gland.

It localises to the secreted. Functionally, antimicrobial peptide with activities against E.coli (MIC=1.3 uM), S.aureus (MIC=3.1 uM), and S.cerevisiae (MIC=50 uM). Also shows histamine-releasing activity (32.9% at 10 uM). Does not show hemolytic activity, even at 50 uM. It is a short peptide for which no alpha-helical region has been predicted. This Odontomachus monticola (Trap-jaw ant) protein is U-poneritoxin(01)-Om1a.